Here is a 322-residue protein sequence, read N- to C-terminus: Putative T-box protein 11 (322 aa).

Positions Leu16–Lys185 form a DNA-binding region, T-box. Residues Thr171–Gly182 show a composition bias toward polar residues. The segment at Thr171–Ile214 is disordered.

Its subcellular location is the nucleus. This is Putative T-box protein 11 (tbx-11) from Caenorhabditis elegans.